Consider the following 148-residue polypeptide: Nucleoside diphosphate kinase (148 aa).

Positions 9, 57, 85, 91, 102, and 112 each coordinate ATP. Residue Thr-91 is modified to Phosphothreonine. His-115 functions as the Pros-phosphohistidine intermediate in the catalytic mechanism. Ser-122 bears the Phosphoserine mark.

This sequence belongs to the NDK family. As to quaternary structure, homotetramer. It depends on Mg(2+) as a cofactor.

It localises to the cytoplasm. It catalyses the reaction a 2'-deoxyribonucleoside 5'-diphosphate + ATP = a 2'-deoxyribonucleoside 5'-triphosphate + ADP. The enzyme catalyses a ribonucleoside 5'-diphosphate + ATP = a ribonucleoside 5'-triphosphate + ADP. In terms of biological role, major role in the synthesis of nucleoside triphosphates other than ATP. The ATP gamma phosphate is transferred to the NDP beta phosphate via a ping-pong mechanism, using a phosphorylated active-site intermediate. This Bacillus anthracis protein is Nucleoside diphosphate kinase.